A 191-amino-acid polypeptide reads, in one-letter code: MSETLNQIKESFIEYLLFQYRFKSRIAVWVLNYIKVNEAKLANIHFVDTKINHHETLEIAEVGSHASAIQFTKRNIKLMNTNEIFDYIANHNCAFDIQIHFANVSKREQRLDDLIVAQLTESPSYQTYLHDLNSMAIDRHKHALLIDYLLHNIDLSLQMNEKQRFYQLTQILNTLKLVNKHNQFEDLADDD.

Belongs to the UPF0302 family.

The protein is UPF0302 protein SA1295 of Staphylococcus aureus (strain N315).